We begin with the raw amino-acid sequence, 586 residues long: UvrABC system protein C (586 aa).

In terms of domain architecture, GIY-YIG spans 17–94 (HKPGCYLWKD…IKQYKPRFNL (78 aa)). The region spanning 201 to 236 (EQVLNHLQQQEIKASEQQNFEAARHFLDLQKAVLEL) is the UVR domain.

It belongs to the UvrC family. Interacts with UvrB in an incision complex.

The protein resides in the cytoplasm. The UvrABC repair system catalyzes the recognition and processing of DNA lesions. UvrC both incises the 5' and 3' sides of the lesion. The N-terminal half is responsible for the 3' incision and the C-terminal half is responsible for the 5' incision. The protein is UvrABC system protein C of Mycoplasma pneumoniae (strain ATCC 29342 / M129 / Subtype 1) (Mycoplasmoides pneumoniae).